The chain runs to 64 residues: Large ribosomal subunit protein bL35 (64 aa).

It belongs to the bacterial ribosomal protein bL35 family.

In Shewanella sediminis (strain HAW-EB3), this protein is Large ribosomal subunit protein bL35.